The following is a 316-amino-acid chain: Ribosomal RNA small subunit methyltransferase H (316 aa).

S-adenosyl-L-methionine is bound by residues 35–37 (AGH), Asp55, Phe84, Asp105, and Gln112.

It belongs to the methyltransferase superfamily. RsmH family.

It is found in the cytoplasm. The catalysed reaction is cytidine(1402) in 16S rRNA + S-adenosyl-L-methionine = N(4)-methylcytidine(1402) in 16S rRNA + S-adenosyl-L-homocysteine + H(+). In terms of biological role, specifically methylates the N4 position of cytidine in position 1402 (C1402) of 16S rRNA. The chain is Ribosomal RNA small subunit methyltransferase H from Streptococcus pneumoniae (strain ATCC 700669 / Spain 23F-1).